Reading from the N-terminus, the 210-residue chain is Na(+)-translocating NADH-quinone reductase subunit D (210 aa).

A run of 5 helical transmembrane segments spans residues phenylalanine 42–isoleucine 62, isoleucine 72–alanine 92, valine 103–methionine 123, phenylalanine 131–phenylalanine 151, and asparagine 178–isoleucine 198.

This sequence belongs to the NqrDE/RnfAE family. As to quaternary structure, composed of six subunits; NqrA, NqrB, NqrC, NqrD, NqrE and NqrF.

The protein localises to the cell inner membrane. It catalyses the reaction a ubiquinone + n Na(+)(in) + NADH + H(+) = a ubiquinol + n Na(+)(out) + NAD(+). Its function is as follows. NQR complex catalyzes the reduction of ubiquinone-1 to ubiquinol by two successive reactions, coupled with the transport of Na(+) ions from the cytoplasm to the periplasm. NqrA to NqrE are probably involved in the second step, the conversion of ubisemiquinone to ubiquinol. This Vibrio cholerae serotype O1 (strain M66-2) protein is Na(+)-translocating NADH-quinone reductase subunit D.